We begin with the raw amino-acid sequence, 468 residues long: 3-isopropylmalate dehydratase large subunit (468 aa).

The [4Fe-4S] cluster site is built by Cys-349, Cys-409, and Cys-412.

Belongs to the aconitase/IPM isomerase family. LeuC type 1 subfamily. In terms of assembly, heterodimer of LeuC and LeuD. [4Fe-4S] cluster is required as a cofactor.

It catalyses the reaction (2R,3S)-3-isopropylmalate = (2S)-2-isopropylmalate. Its pathway is amino-acid biosynthesis; L-leucine biosynthesis; L-leucine from 3-methyl-2-oxobutanoate: step 2/4. Catalyzes the isomerization between 2-isopropylmalate and 3-isopropylmalate, via the formation of 2-isopropylmaleate. The polypeptide is 3-isopropylmalate dehydratase large subunit (Roseobacter denitrificans (strain ATCC 33942 / OCh 114) (Erythrobacter sp. (strain OCh 114))).